The primary structure comprises 470 residues: Argininosuccinate lyase (470 aa).

This sequence belongs to the lyase 1 family. Argininosuccinate lyase subfamily.

It localises to the cytoplasm. It carries out the reaction 2-(N(omega)-L-arginino)succinate = fumarate + L-arginine. The protein operates within amino-acid biosynthesis; L-arginine biosynthesis; L-arginine from L-ornithine and carbamoyl phosphate: step 3/3. The chain is Argininosuccinate lyase from Mycolicibacterium vanbaalenii (strain DSM 7251 / JCM 13017 / BCRC 16820 / KCTC 9966 / NRRL B-24157 / PYR-1) (Mycobacterium vanbaalenii).